The primary structure comprises 167 residues: uncharacterized protein (167 aa).

Residues 70–118 adopt a coiled-coil conformation; that stretch reads KIVELRKAMESIITELAYIKGELKGLQEKGESKVERKEIIEEKIQKAMV. The span at 128–155 shows a compositional bias: basic and acidic residues; sequence EKEERKPAKESKRREHDVIIPEGKKEER. The interval 128 to 167 is disordered; that stretch reads EKEERKPAKESKRREHDVIIPEGKKEERTDDGEDGLIVCD.

This is an uncharacterized protein from Archaeoglobus fulgidus (strain ATCC 49558 / DSM 4304 / JCM 9628 / NBRC 100126 / VC-16).